Reading from the N-terminus, the 127-residue chain is Large ribosomal subunit protein bL21 (127 aa).

This sequence belongs to the bacterial ribosomal protein bL21 family. As to quaternary structure, part of the 50S ribosomal subunit. Contacts protein L20.

Its function is as follows. This protein binds to 23S rRNA in the presence of protein L20. The protein is Large ribosomal subunit protein bL21 of Synechococcus elongatus (strain ATCC 33912 / PCC 7942 / FACHB-805) (Anacystis nidulans R2).